Consider the following 392-residue polypeptide: Succinyl-diaminopimelate desuccinylase (392 aa).

Histidine 78 contacts Zn(2+). Aspartate 80 is a catalytic residue. Aspartate 110 contributes to the Zn(2+) binding site. Glutamate 145 serves as the catalytic Proton acceptor. Residues glutamate 146, glutamate 174, and histidine 363 each contribute to the Zn(2+) site.

Belongs to the peptidase M20A family. DapE subfamily. Homodimer. Zn(2+) is required as a cofactor. It depends on Co(2+) as a cofactor.

The enzyme catalyses N-succinyl-(2S,6S)-2,6-diaminopimelate + H2O = (2S,6S)-2,6-diaminopimelate + succinate. The protein operates within amino-acid biosynthesis; L-lysine biosynthesis via DAP pathway; LL-2,6-diaminopimelate from (S)-tetrahydrodipicolinate (succinylase route): step 3/3. Catalyzes the hydrolysis of N-succinyl-L,L-diaminopimelic acid (SDAP), forming succinate and LL-2,6-diaminopimelate (DAP), an intermediate involved in the bacterial biosynthesis of lysine and meso-diaminopimelic acid, an essential component of bacterial cell walls. This is Succinyl-diaminopimelate desuccinylase from Methylobacterium radiotolerans (strain ATCC 27329 / DSM 1819 / JCM 2831 / NBRC 15690 / NCIMB 10815 / 0-1).